Here is a 231-residue protein sequence, read N- to C-terminus: MKTLWRWLGRALLAAFALLLLWQVWLFAQVAWWRTHNPDSTSFMRLRLDALQEKKPDARLRHTWVPYEQISIHLKRAVVAAEDDGFVDHEGFDWDGIQRALEKNERKGRPVSGGSTISQQLAKNLFLSPSRSYFRKAQEAVITVMIEQLWSKRRILEVYLNVVEWGNGIFGAEAAARRYYGLPASRLGPAEAARLAVMLPNPRKYERSFGPRLAAHADRIRGRMAWAEVPP.

A helical transmembrane segment spans residues 12–32; sequence LLAAFALLLLWQVWLFAQVAW.

The protein belongs to the glycosyltransferase 51 family.

The protein localises to the cell inner membrane. It catalyses the reaction [GlcNAc-(1-&gt;4)-Mur2Ac(oyl-L-Ala-gamma-D-Glu-L-Lys-D-Ala-D-Ala)](n)-di-trans,octa-cis-undecaprenyl diphosphate + beta-D-GlcNAc-(1-&gt;4)-Mur2Ac(oyl-L-Ala-gamma-D-Glu-L-Lys-D-Ala-D-Ala)-di-trans,octa-cis-undecaprenyl diphosphate = [GlcNAc-(1-&gt;4)-Mur2Ac(oyl-L-Ala-gamma-D-Glu-L-Lys-D-Ala-D-Ala)](n+1)-di-trans,octa-cis-undecaprenyl diphosphate + di-trans,octa-cis-undecaprenyl diphosphate + H(+). It participates in cell wall biogenesis; peptidoglycan biosynthesis. In terms of biological role, peptidoglycan polymerase that catalyzes glycan chain elongation from lipid-linked precursors. This Azoarcus sp. (strain BH72) protein is Biosynthetic peptidoglycan transglycosylase.